The sequence spans 345 residues: Biotin synthase (345 aa).

The Radical SAM core domain maps to 38-256; the sequence is RQVQVSTLLS…IAVARIMMPS (219 aa). [4Fe-4S] cluster-binding residues include Cys53, Cys57, and Cys60. [2Fe-2S] cluster contacts are provided by Cys97, Cys128, Cys188, and Arg260.

The protein belongs to the radical SAM superfamily. Biotin synthase family. Homodimer. [4Fe-4S] cluster serves as cofactor. [2Fe-2S] cluster is required as a cofactor.

It carries out the reaction (4R,5S)-dethiobiotin + (sulfur carrier)-SH + 2 reduced [2Fe-2S]-[ferredoxin] + 2 S-adenosyl-L-methionine = (sulfur carrier)-H + biotin + 2 5'-deoxyadenosine + 2 L-methionine + 2 oxidized [2Fe-2S]-[ferredoxin]. It functions in the pathway cofactor biosynthesis; biotin biosynthesis; biotin from 7,8-diaminononanoate: step 2/2. Its function is as follows. Catalyzes the conversion of dethiobiotin (DTB) to biotin by the insertion of a sulfur atom into dethiobiotin via a radical-based mechanism. This chain is Biotin synthase, found in Yersinia pestis bv. Antiqua (strain Antiqua).